We begin with the raw amino-acid sequence, 315 residues long: Probable cell division protein WhiA (315 aa).

Residues 275–309 constitute a DNA-binding region (H-T-H motif); the sequence is TLKELGEMVSSGTVSKSGVNHRLRKIDEIADALRR.

It belongs to the WhiA family.

In terms of biological role, involved in cell division and chromosome segregation. The protein is Probable cell division protein WhiA of Lysinibacillus sphaericus (strain C3-41).